Consider the following 334-residue polypeptide: Mevalonate kinase (334 aa).

110–120 (PVGAGLGSSAA) lines the ATP pocket. The Proton acceptor role is filled by D161.

It belongs to the GHMP kinase family. Mevalonate kinase subfamily. As to quaternary structure, homodimer. The cofactor is Mg(2+).

Its subcellular location is the cytoplasm. It carries out the reaction (R)-mevalonate + ATP = (R)-5-phosphomevalonate + ADP + H(+). It functions in the pathway isoprenoid biosynthesis; isopentenyl diphosphate biosynthesis via mevalonate pathway; isopentenyl diphosphate from (R)-mevalonate: step 1/3. Its function is as follows. Catalyzes the phosphorylation of (R)-mevalonate (MVA) to (R)-mevalonate 5-phosphate (MVAP). Functions in the mevalonate (MVA) pathway leading to isopentenyl diphosphate (IPP), a key precursor for the biosynthesis of isoprenoid compounds such as archaeal membrane lipids. The polypeptide is Mevalonate kinase (Pyrococcus furiosus (strain ATCC 43587 / DSM 3638 / JCM 8422 / Vc1)).